The following is a 661-amino-acid chain: MASTLFYNSMNLSAAVFSRTHFPIPINKDFPLEFSPCIHTDYHLRSRTRSGQKKCLTEVRATVASPTEVPSAPASTQPKKLRILVAGGGIGGLVFALAAKKKGFDVVVFEKDLSAVRGEGQYRGPIQIQSNALAALEAIDMDVAEEVMRVGCVTGDRINGLVDGVSGTWYVKFDTFTPAVERGLPVTRVISRIALQQILARAVGEEIIINDSNVVNFEDLGDKVNVILENGQRYEGDMLVGADGIWSKVRKNLFGLNEAVYSGYTCYTGIADFVPADINSVGYRVFLGHKQYFVSSDVGGGKMQWYAFHKESPGGVDSPNGKKERLLKIFEGWCDNVIDLLLATEEDAILRRDIYDRTPILTWGKGHVTLLGDSVHAMQPNMGQGGCMAIEDGYQLALELDKAWKKSSETGTPVDVASSLRSYENSRRLRVAIIHGMARMAALMASTYKAYLGVGLGPLSFLTKFRIPHPGRVGGRVFIDKAMPLMLSWVLGGNSSKLEGRSPSCRLSDKASDQLRNWFEDDDALERAIDGEWYLIPCGQDNDASQLICLNRDEKNPCIIGSAPHGDVSGISIAIPKPQVSEMHARISYKDGAFYLTDLRSEHGTWIADIEGKRYRVPPNFPARFRPSDAIEIGSQKVAFRVKVMKSSPGSVEKEGILQAA.

The transit peptide at 1–50 (MASTLFYNSMNLSAAVFSRTHFPIPINKDFPLEFSPCIHTDYHLRSRTRS) directs the protein to the chloroplast. FAD-binding positions include 82–110 (RILV…VVFE) and 360–373 (ILTW…LLGD). Residues 558–607 (CIIGSAPHGDVSGISIAIPKPQVSEMHARISYKDGAFYLTDLRSEHGTWI) enclose the FHA domain.

The cofactor is FAD.

It localises to the plastid. The protein localises to the chloroplast. It catalyses the reaction all-trans-zeaxanthin + 4 reduced [2Fe-2S]-[ferredoxin] + 2 O2 + 4 H(+) = all-trans-violaxanthin + 4 oxidized [2Fe-2S]-[ferredoxin] + 2 H2O. It functions in the pathway plant hormone biosynthesis; abscisate biosynthesis. Its function is as follows. Converts zeaxanthin into antheraxanthin and subsequently violaxanthin. Involved in the epoxidation of zeaxanthin. The protein is Zeaxanthin epoxidase, chloroplastic of Prunus armeniaca (Apricot).